A 3955-amino-acid polypeptide reads, in one-letter code: Nonribosomal peptide synthetase fmqA (3955 aa).

The segment at 293–691 is adenylation 1; sequence SYSELETLSL…AQACCTIRNV (399 aa). The 74-residue stretch at 806 to 879 folds into the Carrier 1 domain; that stretch reads THKETLIHQL…DLARLTDVVN (74 aa). Position 840 is an O-(pantetheine 4'-phosphoryl)serine (Ser840). The tract at residues 916-1187 is condensation 1; sequence QDIYPCTPLQ…IATVPLRVRL (272 aa). The adenylation 2 stretch occupies residues 1371-1766; the sequence is TYAELGELSD…DEVEKHVYQC (396 aa). The region spanning 1880–1956 is the Carrier 2 domain; the sequence is EPTSVAEREM…KIMSHESSLS (77 aa). Ser1917 is subject to O-(pantetheine 4'-phosphoryl)serine. The epimerase stretch occupies residues 1970-2261; that stretch reads FALSPIQQMF…FTTMWPVVAE (292 aa). Residues 2438 to 2724 are condensation 2; that stretch reads EDIYPCSPSQ…FNPLPCRVHL (287 aa). The adenylation 3 stretch occupies residues 2906 to 3299; the sequence is TYGQLDELSS…GEVEANVQHC (394 aa). A Carrier 3 domain is found at 3422–3498; that stretch reads APSTEEEKKL…DLAKVAVPKS (77 aa). Ser3459 carries the post-translational modification O-(pantetheine 4'-phosphoryl)serine. The tract at residues 3541 to 3805 is condensation 3; the sequence is PGTQAQQFFI…CLNFIPLRVM (265 aa).

This sequence belongs to the NRP synthetase family. As to quaternary structure, interacts with the mitogen-activated protein kinase mpkA.

The protein localises to the cytoplasmic vesicle. It participates in alkaloid biosynthesis. Functionally, nonribosomal peptide synthetase; part of the gene cluster that mediates the biosynthesis of the antitumor fumiquinazolines that confer a dual-usage capability to defend against phagocytes in the environment and animal hosts. The simplest member is fumiquinazoline F (FQF) with a 6-6-6 tricyclic core derived from anthranilic acid (Ant), tryptophan (Trp), and alanine (Ala). The trimodular NRPS fmqA is responsible for FQF formation. Modules 1, 2 and 3 of fmqA are predicted to activate and load Ant, Trp and Ala, respectively, providing for the assembly of an Ant-Trp-Ala-S-enzyme intermediate that would undergo double cyclization for chain release and generation of the tricyclic 6-6-6 product fumiquinazoline F. The presence of an E domain predicted for module 2 of fmqA is consistent with epimerization of L-Trp to D-Trp during assembly to generate the R-stereocenter at C14 of FQF. The FAD-dependent monooxygenase fmqB and the monomodular NRPS fmqC then maturate FQF to FQA. FmqB oxidizes the 2',3'-double bond of the indole side chain of FQF, and fmqC activates L-Ala as the adenylate, installs it as the pantetheinyl thioester on its carrier protein domain, and acylates the oxidized indole for subsequent intramolecular cyclization to create the 6-5-5-imidazolindolone of FQA. The FAD-linked oxidoreductase fmqD introduces a third layer of scaffold complexity by converting FQA to the spirohemiaminal FQC, presumably by catalyzing the formation of a transient imine within the pyrazinone ring. FQC subsequently converts nonenzymatically to the known cyclic aminal FQD. This chain is Nonribosomal peptide synthetase fmqA, found in Aspergillus fumigatus (strain ATCC MYA-4609 / CBS 101355 / FGSC A1100 / Af293) (Neosartorya fumigata).